Reading from the N-terminus, the 240-residue chain is MVSKTPSTSSDEANATADERCRKGKVPKRINKAVRERLKREHLNELFIELADTLELNQQNSGKASILCEATRFLKDVFGQIESLRKEHASLLSESSYVTTEKNELKEETSVLETEISKLQNEIEARANQSKPDLNTSPAPEYHHHHYQQQHPERVSQFPGLPIFQGPGFQQSATTLHPPATVLVLPIQPDPQTQDISEMTQAQQPLMFNSSNVSKPCPRYASAADSWSSRLLGERLKASE.

Residues 1–13 (MVSKTPSTSSDEA) are compositionally biased toward polar residues. The segment at 1-26 (MVSKTPSTSSDEANATADERCRKGKV) is disordered. One can recognise a bHLH domain in the interval 27–77 (PKRINKAVRERLKREHLNELFIELADTLELNQQNSGKASILCEATRFLKDV). Residues 98–131 (VTTEKNELKEETSVLETEISKLQNEIEARANQSK) adopt a coiled-coil conformation. The span at 128-138 (NQSKPDLNTSP) shows a compositional bias: polar residues. Residues 128-153 (NQSKPDLNTSPAPEYHHHHYQQQHPE) are disordered.

Homodimer. Forms heterodimer with PYEL proteins bHLH115, bHLH104 and ILR3. As to expression, expressed constitutively in roots, leaves, stems, and flowers.

It localises to the nucleus. The sequence is that of Transcription factor bHLH47 (BHLH47) from Arabidopsis thaliana (Mouse-ear cress).